Reading from the N-terminus, the 508-residue chain is Photosystem II CP47 reaction center protein (508 aa).

6 consecutive transmembrane segments (helical) span residues 21 to 36, 101 to 115, 140 to 156, 203 to 218, 237 to 252, and 457 to 472; these read AVHIMHTALVAGWAGS, ILFSGLCFLAAIWHW, GIHLFLSGLACFGFGAF, IAAGTLGILAGLFHLS, VLSSSIAAVFFAAFVV, and SFALLFFFGHIWHGAR.

Belongs to the PsbB/PsbC family. PsbB subfamily. PSII is composed of 1 copy each of membrane proteins PsbA, PsbB, PsbC, PsbD, PsbE, PsbF, PsbH, PsbI, PsbJ, PsbK, PsbL, PsbM, PsbT, PsbX, PsbY, PsbZ, Psb30/Ycf12, at least 3 peripheral proteins of the oxygen-evolving complex and a large number of cofactors. It forms dimeric complexes. It depends on Binds multiple chlorophylls. PSII binds additional chlorophylls, carotenoids and specific lipids. as a cofactor.

The protein localises to the plastid. The protein resides in the chloroplast thylakoid membrane. In terms of biological role, one of the components of the core complex of photosystem II (PSII). It binds chlorophyll and helps catalyze the primary light-induced photochemical processes of PSII. PSII is a light-driven water:plastoquinone oxidoreductase, using light energy to abstract electrons from H(2)O, generating O(2) and a proton gradient subsequently used for ATP formation. The chain is Photosystem II CP47 reaction center protein from Oenothera argillicola (Appalachian evening primrose).